We begin with the raw amino-acid sequence, 466 residues long: Asparagine--tRNA ligase (466 aa).

Belongs to the class-II aminoacyl-tRNA synthetase family. In terms of assembly, homodimer.

The protein localises to the cytoplasm. The enzyme catalyses tRNA(Asn) + L-asparagine + ATP = L-asparaginyl-tRNA(Asn) + AMP + diphosphate + H(+). The chain is Asparagine--tRNA ligase from Shewanella amazonensis (strain ATCC BAA-1098 / SB2B).